Consider the following 197-residue polypeptide: TATA-box-binding protein (197 aa).

2 consecutive repeat copies span residues 14 to 90 (IENI…IKTL) and 105 to 181 (IQNI…FDKL).

This sequence belongs to the TBP family.

General factor that plays a role in the activation of archaeal genes transcribed by RNA polymerase. Binds specifically to the TATA box promoter element which lies close to the position of transcription initiation. The protein is TATA-box-binding protein (tbp) of Sulfolobus acidocaldarius (strain ATCC 33909 / DSM 639 / JCM 8929 / NBRC 15157 / NCIMB 11770).